The following is a 214-amino-acid chain: 3,4-dihydroxy-2-butanone 4-phosphate synthase (214 aa).

D-ribulose 5-phosphate contacts are provided by residues arginine 37–glutamate 38, aspartate 42, arginine 150–threonine 154, and glutamate 174. Glutamate 38 lines the Mg(2+) pocket. A Mg(2+)-binding site is contributed by histidine 153.

Belongs to the DHBP synthase family. In terms of assembly, homodimer. It depends on Mg(2+) as a cofactor. The cofactor is Mn(2+).

It carries out the reaction D-ribulose 5-phosphate = (2S)-2-hydroxy-3-oxobutyl phosphate + formate + H(+). It functions in the pathway cofactor biosynthesis; riboflavin biosynthesis; 2-hydroxy-3-oxobutyl phosphate from D-ribulose 5-phosphate: step 1/1. Functionally, catalyzes the conversion of D-ribulose 5-phosphate to formate and 3,4-dihydroxy-2-butanone 4-phosphate. The protein is 3,4-dihydroxy-2-butanone 4-phosphate synthase of Histophilus somni (strain 2336) (Haemophilus somnus).